Consider the following 1195-residue polypeptide: Protein PIP82 (1195 aa).

Residues 1–10 (MSHQEQQFQH) show a composition bias toward low complexity. Disordered regions lie at residues 1 to 55 (MSHQ…IGSS), 85 to 132 (KLRG…SQQF), 291 to 471 (NTFD…TANL), 493 to 515 (KVAKEPEELETKAEGSATGGASG), 544 to 567 (QRNANNQNATTSKQPKPNTVGHEP), 613 to 637 (EEDNEEDHSQDQTKRGQSSVSGIAT), 702 to 771 (MSPV…IVPK), 833 to 977 (SAGS…VKTS), and 1060 to 1195 (QITV…VVEI). Residues 11–26 (YPHHQHHHHHHHHHIH) show a composition bias toward basic residues. The segment covering 37 to 50 (RSSDLEPNRSRNTD) has biased composition (basic and acidic residues). Positions 109–118 (GSAKDGAGAA) are enriched in low complexity. Polar residues predominate over residues 119-132 (QQTHLQVAGQSQQF). The segment covering 300–313 (HEQFERGKISHETD) has biased composition (basic and acidic residues). Low complexity predominate over residues 351 to 360 (QQAAAEESPQ). Positions 361-371 (ANPPPPPPPRP) are enriched in pro residues. Positions 400–450 (ETTKTAENADENNASRKLSIRQNIKRLRKSIKRPSKIKSKAAAPVPDSDEE) are phospho-regulated basic and hydrophobic (PRBH) motif. Basic residues predominate over residues 422-438 (NIKRLRKSIKRPSKIKS). Residues 494-505 (VAKEPEELETKA) are compositionally biased toward basic and acidic residues. Positions 545 to 560 (RNANNQNATTSKQPKP) are enriched in polar residues. Polar residues-rich tracts occupy residues 732 to 742 (SGPQKSMSYSP) and 856 to 867 (RVQSPQIGNSRE). Acidic residues predominate over residues 872 to 891 (QEEEDKEAERDSEEEEEERD). 2 stretches are compositionally biased toward pro residues: residues 898-910 (SESPPPPPLPQRR) and 925-939 (VPPPLPVSKPPPPPS). Positions 940-968 (VETIPSVASLPSPAPVTRSMAQRSASMSR) are enriched in low complexity. Residues 1075–1085 (QSDQSDQSAHQ) are compositionally biased toward polar residues. Positions 1086-1095 (EITDTRKTKS) are enriched in basic and acidic residues. Over residues 1102–1111 (RQNSNCSRSE) the composition is skewed to polar residues. Low complexity-rich tracts occupy residues 1114 to 1149 (SPLSFPSSRRSSTPTNLNANSNSNPNPSTNPNQNPS) and 1179 to 1195 (SYYSISPSGSSRYVVEI).

Phosphorylated by aPKC which lowers lipid affinity and promotes dissociation from the cell cortex. In the photoreceptor cells, aPKC-mediated phosphorylation leads to its displacement from the stalk apical cortex and thus restricts its localization to the rhabdomeric apical cortex where it functions. Dephosphorylation appears to be light-dependent. As to expression, restricted to photoreceptor cells (at protein level). Not detected until approximately 48hrs after puparium formation (APF) and then maintained in the photoreceptor cells post-eclosion (at protein level).

The protein resides in the cytoplasm. It is found in the cell cortex. The protein localises to the cytosol. It localises to the cell projection. Its subcellular location is the rhabdomere. Required for the morphological differentiation and maintenance of the rhabdomeric photoreceptor apical domain. Acts as a downstream component of the gl and Pph13 transcriptional pathway which is required for photoreceptor cell development. Likely to function by regulating the trafficking or retention of rhabdomeric proteins including the phototransduction proteins ninaE and didum. In Drosophila melanogaster (Fruit fly), this protein is Protein PIP82.